A 332-amino-acid chain; its full sequence is MKVAVLGAGAWGTALAGHLAARHDTLLWARDAALIAGLQARHENSRYLDGIALPDALRYDADLGAALAHGAADDALCVIAAPVAGLRTLCHAMRDAGCVPAHVVWVCKGFEADTHLLPHQVIAAELPEQQSNGVLSGPSFAREVGQSLPVALTVASVSAECRERTLAAFHHGAMRIYTGDDVVGVEVGGAVKNVLAIATGISDGLGLGLNARAALITRGLAEMSRLGVALGGRAETFTGLTGLGDLILTATGDLSRNRTVGLQLAAGRTLNDILGALGHVAEGVRCAQAVLALARAQSIDMPITQAVCGVLFDGIAPRDAVSGLLRRDARAE.

NADPH is bound by residues tryptophan 11, arginine 30, and lysine 108. 3 residues coordinate sn-glycerol 3-phosphate: lysine 108, glycine 137, and serine 139. Position 141 (alanine 141) interacts with NADPH. Sn-glycerol 3-phosphate contacts are provided by lysine 192, aspartate 245, serine 255, arginine 256, and asparagine 257. The active-site Proton acceptor is lysine 192. Arginine 256 lines the NADPH pocket. Residues valine 280 and glutamate 282 each contribute to the NADPH site.

The protein belongs to the NAD-dependent glycerol-3-phosphate dehydrogenase family.

It is found in the cytoplasm. The catalysed reaction is sn-glycerol 3-phosphate + NAD(+) = dihydroxyacetone phosphate + NADH + H(+). It carries out the reaction sn-glycerol 3-phosphate + NADP(+) = dihydroxyacetone phosphate + NADPH + H(+). Its pathway is membrane lipid metabolism; glycerophospholipid metabolism. Functionally, catalyzes the reduction of the glycolytic intermediate dihydroxyacetone phosphate (DHAP) to sn-glycerol 3-phosphate (G3P), the key precursor for phospholipid synthesis. This chain is Glycerol-3-phosphate dehydrogenase [NAD(P)+], found in Burkholderia cenocepacia (strain HI2424).